Here is a 1328-residue protein sequence, read N- to C-terminus: 5'-3' exoribonuclease 1 (1328 aa).

Residues 1211–1328 (AGKNRKTNVS…VQPMGKLQIN (118 aa)) form a disordered region. Polar residues predominate over residues 1217–1231 (TNVSANNVSQGTDSR). A compositionally biased stretch (basic residues) spans 1275–1286 (HKSKSKFSKGNH).

Belongs to the 5'-3' exonuclease family. In terms of assembly, monomer. Requires Mg(2+) as cofactor.

It localises to the cytoplasm. Its subcellular location is the perinuclear region. The protein localises to the P-body. With respect to regulation, strand exchange activity is enhanced by fatty acid synthase (stimulatory factor P190/210). In terms of biological role, multifunctional protein that exhibits several independent functions at different levels of the cellular processes. 5'-3' exonuclease component of the nonsense-mediated mRNA decay (NMD) which is a highly conserved mRNA degradation pathway, an RNA surveillance system whose role is to identify and rid cells of mRNA with premature termination codons and thus prevents accumulation of potentially harmful truncated proteins. Involved in the degradation of several hypomodified mature tRNA species and participates in the 5'-processing or the degradation of the snoRNA precursors and rRNA processing. The sequence is that of 5'-3' exoribonuclease 1 (exo2) from Schizosaccharomyces pombe (strain 972 / ATCC 24843) (Fission yeast).